A 354-amino-acid chain; its full sequence is S-adenosylmethionine:tRNA ribosyltransferase-isomerase (354 aa).

It belongs to the QueA family. Monomer.

It is found in the cytoplasm. It carries out the reaction 7-aminomethyl-7-carbaguanosine(34) in tRNA + S-adenosyl-L-methionine = epoxyqueuosine(34) in tRNA + adenine + L-methionine + 2 H(+). It participates in tRNA modification; tRNA-queuosine biosynthesis. Its function is as follows. Transfers and isomerizes the ribose moiety from AdoMet to the 7-aminomethyl group of 7-deazaguanine (preQ1-tRNA) to give epoxyqueuosine (oQ-tRNA). The polypeptide is S-adenosylmethionine:tRNA ribosyltransferase-isomerase (Dichelobacter nodosus (strain VCS1703A)).